The chain runs to 369 residues: 4-hydroxy-3-methylbut-2-en-1-yl diphosphate synthase (flavodoxin) (369 aa).

Residues Cys-270, Cys-273, Cys-305, and Glu-312 each contribute to the [4Fe-4S] cluster site.

The protein belongs to the IspG family. [4Fe-4S] cluster serves as cofactor.

The enzyme catalyses (2E)-4-hydroxy-3-methylbut-2-enyl diphosphate + oxidized [flavodoxin] + H2O + 2 H(+) = 2-C-methyl-D-erythritol 2,4-cyclic diphosphate + reduced [flavodoxin]. It participates in isoprenoid biosynthesis; isopentenyl diphosphate biosynthesis via DXP pathway; isopentenyl diphosphate from 1-deoxy-D-xylulose 5-phosphate: step 5/6. Converts 2C-methyl-D-erythritol 2,4-cyclodiphosphate (ME-2,4cPP) into 1-hydroxy-2-methyl-2-(E)-butenyl 4-diphosphate. In Pseudomonas putida (strain ATCC 700007 / DSM 6899 / JCM 31910 / BCRC 17059 / LMG 24140 / F1), this protein is 4-hydroxy-3-methylbut-2-en-1-yl diphosphate synthase (flavodoxin).